Consider the following 279-residue polypeptide: Undecaprenyl-diphosphatase (279 aa).

8 helical membrane passes run 2–22 (LIIELLKAIFFGIIEGITEWL), 44–64 (AFIEMFNIVIQLGAIIAVMLI), 85–105 (WQLWLKVVIACIPSILIAVPL), 113–133 (FYFMVPIAIALIVYGIAFIWI), 163–183 (VLSIVPGTSRSGATILGAIIL), 188–208 (TVAADFTFFLAIPTMFGYSGL), 223–243 (AQVLILLVASLTAFVVSLLAI), and 255–275 (FTIFGKYRIVLGSLLLIYSFF).

Belongs to the UppP family.

It localises to the cell membrane. It catalyses the reaction di-trans,octa-cis-undecaprenyl diphosphate + H2O = di-trans,octa-cis-undecaprenyl phosphate + phosphate + H(+). In terms of biological role, catalyzes the dephosphorylation of undecaprenyl diphosphate (UPP). Confers resistance to bacitracin. This Streptococcus pyogenes serotype M28 (strain MGAS6180) protein is Undecaprenyl-diphosphatase.